Consider the following 188-residue polypeptide: Peroxidase B (188 aa).

The protein belongs to the peroxidase family. Post-translationally, partially N-glycosylated.

The protein localises to the secreted. It carries out the reaction 2 a phenolic donor + H2O2 = 2 a phenolic radical donor + 2 H2O. The polypeptide is Peroxidase B (Aloe vera (Aloe)).